The chain runs to 142 residues: Transcriptional regulator MraZ (142 aa).

SpoVT-AbrB domains lie at 5-47 (THTP…PAPE) and 76-119 (AHDE…DRVA).

This sequence belongs to the MraZ family. As to quaternary structure, forms oligomers.

The protein localises to the cytoplasm. The protein resides in the nucleoid. The sequence is that of Transcriptional regulator MraZ from Salinispora arenicola (strain CNS-205).